Here is a 556-residue protein sequence, read N- to C-terminus: Formate--tetrahydrofolate ligase (556 aa).

Residue 65–72 (TPAGEGKT) coordinates ATP.

The protein belongs to the formate--tetrahydrofolate ligase family.

The catalysed reaction is (6S)-5,6,7,8-tetrahydrofolate + formate + ATP = (6R)-10-formyltetrahydrofolate + ADP + phosphate. Its pathway is one-carbon metabolism; tetrahydrofolate interconversion. The chain is Formate--tetrahydrofolate ligase from Ruminiclostridium cellulolyticum (strain ATCC 35319 / DSM 5812 / JCM 6584 / H10) (Clostridium cellulolyticum).